The sequence spans 1687 residues: A-kinase anchor protein SPHKAP (1687 aa).

Residues 1–14 (MDVNSRLSVQSNVE) show a composition bias toward polar residues. Disordered stretches follow at residues 1 to 25 (MDVNSRLSVQSNVESPLMHEGPEPQ) and 272 to 293 (RKHRTPSTKTEGSKENTEENTS). The tract at residues 914–931 (FAEELAETVVSMATEIAA) is PKA-RII subunit binding domain. A disordered region spans residues 964 to 989 (LKRKKENSSAGSTVRKHKPPRLSEIK). Phosphoserine is present on residues serine 1010, serine 1070, serine 1092, serine 1105, serine 1106, serine 1109, serine 1244, and serine 1273. Disordered regions lie at residues 1363–1406 (VTEG…SPRR) and 1421–1520 (DQKE…PDDT). A compositionally biased stretch (polar residues) spans 1366–1375 (GNHSPVSSPG). The span at 1382–1393 (KPSDFDPRRETS) shows a compositional bias: basic and acidic residues. Over residues 1461–1470 (TAPSTCQSSR) the composition is skewed to polar residues. Residues 1482–1494 (EVLKEDIPRDESR) are compositionally biased toward basic and acidic residues. A compositionally biased stretch (low complexity) spans 1495-1508 (NPPSSSEESTGSWS).

The protein belongs to the AKAP110 family. Interacts (via the PKA-RII subunit binding domain) with the RI subunit of PKA. Interacts with SPHK1; the interaction greatly reduces SPHK1 activity.

It localises to the cytoplasm. Its function is as follows. Anchoring protein that binds preferentially to the type I regulatory subunit of c-AMP-dependent protein kinase (PKA type I) and targets it to distinct subcellular compartments. May act as a converging factor linking cAMP and sphingosine signaling pathways. Plays a regulatory role in the modulation of SPHK1. This chain is A-kinase anchor protein SPHKAP (Sphkap), found in Mus musculus (Mouse).